Here is a 209-residue protein sequence, read N- to C-terminus: 3-demethoxyubiquinol 3-hydroxylase (209 aa).

The span at 23-36 (PHATRAAPAPAQAP) shows a compositional bias: low complexity. A disordered region spans residues 23 to 42 (PHATRAAPAPAQAPGEMTDS). 6 residues coordinate Fe cation: E58, E88, H91, E140, E172, and H175.

It belongs to the COQ7 family. Requires Fe cation as cofactor.

The protein resides in the cell membrane. The enzyme catalyses a 5-methoxy-2-methyl-3-(all-trans-polyprenyl)benzene-1,4-diol + AH2 + O2 = a 3-demethylubiquinol + A + H2O. The protein operates within cofactor biosynthesis; ubiquinone biosynthesis. Functionally, catalyzes the hydroxylation of 2-nonaprenyl-3-methyl-6-methoxy-1,4-benzoquinol during ubiquinone biosynthesis. In Variovorax paradoxus (strain S110), this protein is 3-demethoxyubiquinol 3-hydroxylase.